We begin with the raw amino-acid sequence, 44 residues long: Large ribosomal subunit protein bL34 (44 aa).

The protein belongs to the bacterial ribosomal protein bL34 family.

In Wolbachia pipientis wMel, this protein is Large ribosomal subunit protein bL34.